The sequence spans 198 residues: Molybdopterin synthase catalytic subunit (198 aa).

Residues 107-108 (HR), Lys-123, and 130-132 (KKE) contribute to the substrate site.

The protein belongs to the MoaE family. MOCS2B subfamily. In terms of assembly, heterotetramer; composed of 2 small (MOCS2A) and 2 large (MOCS2B) subunits.

It localises to the cytoplasm. The catalysed reaction is 2 [molybdopterin-synthase sulfur-carrier protein]-C-terminal-Gly-aminoethanethioate + cyclic pyranopterin phosphate + H2O = molybdopterin + 2 [molybdopterin-synthase sulfur-carrier protein]-C-terminal Gly-Gly + 2 H(+). It participates in cofactor biosynthesis; molybdopterin biosynthesis. In terms of biological role, catalytic subunit of the molybdopterin synthase complex, a complex that catalyzes the conversion of precursor Z into molybdopterin. Acts by mediating the incorporation of 2 sulfur atoms from thiocarboxylated MOCS2A into precursor Z to generate a dithiolene group. The sequence is that of Molybdopterin synthase catalytic subunit from Arabidopsis thaliana (Mouse-ear cress).